A 197-amino-acid polypeptide reads, in one-letter code: Transcription factor FapR (197 aa).

Belongs to the FapR family.

In terms of biological role, transcriptional factor involved in regulation of membrane lipid biosynthesis by repressing genes involved in fatty acid and phospholipid metabolism. The chain is Transcription factor FapR from Bacillus mycoides (strain KBAB4) (Bacillus weihenstephanensis).